The sequence spans 409 residues: 3-dehydro-bile acid delta(4,6)-reductase (409 aa).

FAD is bound by residues S12, E33, V131, E378, N390, and L391.

This sequence belongs to the BaiN/RdsA family. BaiN subfamily. FAD serves as cofactor.

The catalysed reaction is 3-oxocholan-24-oyl-CoA + NAD(+) = 3-oxochol-4-en-24-oyl-CoA + NADH + H(+). It catalyses the reaction 3-oxochol-4-en-24-oyl-CoA + NAD(+) = 3-oxochol-4,6-dien-24-oyl-CoA + NADH + H(+). It carries out the reaction 12alpha-hydroxy-3-oxocholan-24-oyl-CoA + NAD(+) = 12alpha-hydroxy-3-oxochol-4-en-24-oyl-CoA + NADH + H(+). The enzyme catalyses 12alpha-hydroxy-3-oxochol-4-en-24-oyl-CoA + NAD(+) = 12alpha-hydroxy-3-oxochola-4,6-dien-24-oyl-CoA + NADH + H(+). It functions in the pathway lipid metabolism; bile acid degradation. Functionally, involved in the secondary bile acid metabolism. Catalyzes two subsequent reductions of the double bonds within the bile acid A/B rings of 3-oxochol-4,6-dien-24-oyl-CoA and 12alpha-hydroxy-3-oxochol-4,6-dien-24-oyl-CoA to yield 3-oxocholan-24-oyl-CoA and 12alpha-hydroxy-3-oxocholan-24-oyl-CoA, respectively. This chain is 3-dehydro-bile acid delta(4,6)-reductase, found in Clostridium scindens (strain ATCC 35704 / DSM 5676 / VPI 13733 / 19).